The primary structure comprises 90 residues: FMRFamide-like neuropeptides 27 (90 aa).

The first 24 residues, 1–24 (MFSFRKFLAFMLIVIALMASFSSA), serve as a signal peptide directing secretion. Positions 25 to 36 (QPIDEERPIFME) are excised as a propeptide. At phenylalanine 61 the chain carries Phenylalanine amide. The propeptide occupies 65–90 (SSSPSDISMAELRAIYGGGPVEYVQL).

The protein belongs to the FARP (FMRFamide related peptide) family.

The protein resides in the secreted. FMRFamides and FMRFamide-like peptides are neuropeptides. The protein is FMRFamide-like neuropeptides 27 of Caenorhabditis briggsae.